The primary structure comprises 118 residues: Large ribosomal subunit protein bL20 (118 aa).

This sequence belongs to the bacterial ribosomal protein bL20 family.

Binds directly to 23S ribosomal RNA and is necessary for the in vitro assembly process of the 50S ribosomal subunit. It is not involved in the protein synthesizing functions of that subunit. The chain is Large ribosomal subunit protein bL20 from Marinomonas sp. (strain MWYL1).